The primary structure comprises 277 residues: 3-methyl-2-oxobutanoate hydroxymethyltransferase (277 aa).

Mg(2+) contacts are provided by Asp-43 and Asp-82. 3-methyl-2-oxobutanoate is bound by residues 43–44 (DS), Asp-82, and Lys-112. Glu-114 lines the Mg(2+) pocket. Catalysis depends on Glu-181, which acts as the Proton acceptor.

The protein belongs to the PanB family. Homodecamer; pentamer of dimers. Mg(2+) serves as cofactor.

Its subcellular location is the cytoplasm. It carries out the reaction 3-methyl-2-oxobutanoate + (6R)-5,10-methylene-5,6,7,8-tetrahydrofolate + H2O = 2-dehydropantoate + (6S)-5,6,7,8-tetrahydrofolate. It functions in the pathway cofactor biosynthesis; (R)-pantothenate biosynthesis; (R)-pantoate from 3-methyl-2-oxobutanoate: step 1/2. In terms of biological role, catalyzes the reversible reaction in which hydroxymethyl group from 5,10-methylenetetrahydrofolate is transferred onto alpha-ketoisovalerate to form ketopantoate. This Bacillus velezensis (strain DSM 23117 / BGSC 10A6 / LMG 26770 / FZB42) (Bacillus amyloliquefaciens subsp. plantarum) protein is 3-methyl-2-oxobutanoate hydroxymethyltransferase.